We begin with the raw amino-acid sequence, 314 residues long: Deoxymugineic acid synthase 1 (314 aa).

Asp-44 provides a ligand contact to NADP(+). Tyr-49 acts as the Proton donor in catalysis. His-112 serves as a coordination point for substrate. NADP(+) contacts are provided by residues 158–159 (CN), Gln-180, 258–266 (FDEGRMKEN), and 273–281 (ELSEEERQR).

The protein belongs to the aldo/keto reductase family.

The enzyme catalyses 2'-deoxymugineate + NAD(+) = 3''-deamino-3''-oxonicotianamine + NADH + H(+). The catalysed reaction is 2'-deoxymugineate + NADP(+) = 3''-deamino-3''-oxonicotianamine + NADPH + H(+). Its pathway is siderophore biosynthesis. In terms of biological role, catalyzes the reduction of a 3''-keto intermediate during the biosynthesis of 2'-deoxymugineic acid (DMA) from L-Met. Involved in the formation of phytosiderophores (MAs) belonging to the mugineic acid family and required to acquire iron. In Zea mays (Maize), this protein is Deoxymugineic acid synthase 1.